A 215-amino-acid polypeptide reads, in one-letter code: Cytochrome b6 (215 aa).

The helical transmembrane segment at 32 to 52 threads the bilayer; sequence IFYCLGGITLTCFLVQVATGF. Residue C35 participates in heme c binding. H86 and H100 together coordinate heme b. Helical transmembrane passes span 90 to 110, 116 to 136, and 186 to 206; these read ASMM…TGGF, LTWV…VTGY, and LHTF…FPMI. Residues H187 and H202 each coordinate heme b.

Belongs to the cytochrome b family. PetB subfamily. In terms of assembly, the 4 large subunits of the cytochrome b6-f complex are cytochrome b6, subunit IV (17 kDa polypeptide, PetD), cytochrome f and the Rieske protein, while the 4 small subunits are PetG, PetL, PetM and PetN. The complex functions as a dimer. It depends on heme b as a cofactor. Requires heme c as cofactor.

The protein localises to the plastid. Its subcellular location is the chloroplast thylakoid membrane. Its function is as follows. Component of the cytochrome b6-f complex, which mediates electron transfer between photosystem II (PSII) and photosystem I (PSI), cyclic electron flow around PSI, and state transitions. In Daucus carota (Wild carrot), this protein is Cytochrome b6.